A 509-amino-acid chain; its full sequence is Legumin A (509 aa).

Positions 1-21 (MAINPSLLFLSLLFLFNGCLA) are cleaved as a signal peptide. Disulfide bonds link Cys34-Cys67 and Cys110-Cys331. In terms of domain architecture, Cupin type-1 1 spans 39–273 (LRASAPQTRI…AFNVDHDIIR (235 aa)). Disordered stretches follow at residues 187 to 248 (AGNP…ESSS) and 298 to 325 (PRME…QDNG). Acidic residues predominate over residues 212-228 (EESEEEEGEGEEEEEED). Over residues 299-314 (RMEEEEREERQQEQRY) the composition is skewed to basic and acidic residues. A Cupin type-1 2 domain is found at 337-486 (ENLADPERAD…SYQVSREDAR (150 aa)).

It belongs to the 11S seed storage protein (globulins) family. As to quaternary structure, hexamer; each subunit is composed of an acidic and a basic chain derived from a single precursor and linked by a disulfide bond.

Functionally, this is a seed storage protein. This chain is Legumin A (LEGA), found in Gossypium hirsutum (Upland cotton).